A 353-amino-acid chain; its full sequence is DNA replication and repair protein RecF (353 aa).

ATP is bound at residue 30–37 (GANGQGKT).

It belongs to the RecF family.

It is found in the cytoplasm. The RecF protein is involved in DNA metabolism; it is required for DNA replication and normal SOS inducibility. RecF binds preferentially to single-stranded, linear DNA. It also seems to bind ATP. The protein is DNA replication and repair protein RecF of Carboxydothermus hydrogenoformans (strain ATCC BAA-161 / DSM 6008 / Z-2901).